Reading from the N-terminus, the 438-residue chain is MADYQGKNVVIIGLGLTGLSCVDFFLARGVTPRVMDTRMTPPGLDKLPEAVERHTGSLNDEWLMAADLIVASPGIALAHPSLSAAADAGIEIVGDIELFCREAQAPIVAITGSNGKSTVTTLVGEMAKAAGVNVGVGGNIGLPALMLLDDECELYVLELSSFQLETTSSLQAVAATILNVTEDHMDRYPFGLQQYRAAKLRIYENAKVCVVNADDALTMPIRGADERCVSFGVNMGDYHLNHQQGETWLRVKGEKVLNVKEMKLSGQHNYTNALAALALADAAGLPRASSLKALTTFTGLPHRFEVVLEHNGVRWINDSKATNVGSTEAALNGLHVDGTLHLLLGGDGKSADFSPLARYLNGDNVRLYCFGRDGAQLAALRPEVAEQTETMEQAMRLLAPRVQPGDMVLLSPACASLDQFKNFEQRGNEFARLAKELG.

112 to 118 (GSNGKST) provides a ligand contact to ATP.

It belongs to the MurCDEF family. Mg(2+) serves as cofactor.

It is found in the cytoplasm. The enzyme catalyses UDP-N-acetyl-alpha-D-muramoyl-L-alanine + D-glutamate + ATP = UDP-N-acetyl-alpha-D-muramoyl-L-alanyl-D-glutamate + ADP + phosphate + H(+). It participates in cell wall biogenesis; peptidoglycan biosynthesis. Its function is as follows. Cell wall formation. Catalyzes the addition of glutamate to the nucleotide precursor UDP-N-acetylmuramoyl-L-alanine (UMA). This is UDP-N-acetylmuramoylalanine--D-glutamate ligase (murD) from Escherichia coli (strain K12).